The following is a 161-amino-acid chain: DNA-directed RNA polymerase 18 kDa subunit (161 aa).

Belongs to the poxviridae DNA-directed RNA polymerase 18 kDa subunit family. The DNA-dependent RNA polymerase used for intermediate and late genes expression consists of eight subunits Rpo30/OPG66, Rpo7/OPG90, Rpo22/OPG103, Rpo147/OPG105, Rpo18/OPG119, Rpo19/OPG131, Rpo132/OPG151 and Rpo35/OPG156. The same holoenzyme, with the addition of the transcription-specificity factor OPG109, is used for early gene expression. Post-translationally, apparently non-glycosylated.

Its subcellular location is the virion. It catalyses the reaction RNA(n) + a ribonucleoside 5'-triphosphate = RNA(n+1) + diphosphate. Part of the DNA-dependent RNA polymerase which catalyzes the transcription of viral DNA into RNA using the four ribonucleoside triphosphates as substrates. Responsible for the transcription of early, intermediate and late genes. DNA-dependent RNA polymerase associates with the early transcription factor (ETF), itself composed of OPG118 and OPG133, thereby allowing the early genes transcription. Late transcription, and probably also intermediate transcription, require newly synthesized RNA polymerase. The polypeptide is DNA-directed RNA polymerase 18 kDa subunit (OPG119) (Cynomys gunnisoni (Gunnison's prairie dog)).